The primary structure comprises 406 residues: Putative sodium-coupled neutral amino acid transporter 11 (406 aa).

The Cytoplasmic segment spans residues Met1–Pro7. Residues Leu8–Ile28 traverse the membrane as a helical segment. The N-linked (GlcNAc...) asparagine glycan is linked to Asn44. Helical transmembrane passes span Gly48–Ile68, Val93–Ser113, Leu121–Ala141, Ala156–Ile176, Met202–Phe222, and Val241–Thr263. Asn275 is a glycosylation site (N-linked (GlcNAc...) asparagine). Helical transmembrane passes span Val279 to Ile299, Cys301 to Ile321, and Ile340 to Ala360.

It belongs to the amino acid/polyamine transporter 2 family.

It localises to the membrane. Functionally, putative sodium-dependent amino acid/proton antiporter. This is Putative sodium-coupled neutral amino acid transporter 11 (SLC38A11) from Homo sapiens (Human).